A 441-amino-acid chain; its full sequence is MDLNKEWEKVQEMAFTSWVNSVLEKRGCDKISDVSTDLSDGVKLIYFLESVSGKKFPKKFDLEPKTRIMRVQNLHLAMLFIDEDLKIKVQGVAAEEFVDNNKKMILGFLWTLYRKYRISVINEGDKSSEEGLLAWCKKTTEGYNNVNITGFKSSFRDGHGFLALAHKYDPTVFKYDEYEGHDNIARLNAAFDFAEKGLGIPKLLEAESLSKGNVDERSIVLYTSLFFHAFRAKEEREALEASQNSLNNKLASLEQSLEGEKHSQEELVKQKKDLEDALNKIREQNDNRNSRITDLQSKIDDALRGLDDEKLAKLDLESRLAKCEKDKAILELKLAEILDEKDRLEKKIDEDKKRAEAERLGLGLIRQHLAAQFSDIHKWQSFLEHPETVPYTGTPVDLDSELSSLSFEEQAKKLASKLESENILIEKYLNGKEEAKAAAKK.

The segment at 1-229 (MDLNKEWEKV…VLYTSLFFHA (229 aa)) is actin-binding. Calponin-homology (CH) domains are found at residues 9 to 117 (KVQE…RKYR) and 126 to 231 (KSSE…HAFR). Coiled-coil stretches lie at residues 229–362 (AFRA…RLGL) and 406–430 (SFEEQAKKLASKLESENILIEKYLN).

It belongs to the cortexillin family. As to quaternary structure, homodimer; parallel.

It localises to the cytoplasm. The protein resides in the cytoskeleton. Its function is as follows. Actin-bundling protein. When linked to F-actin the actin filaments form preferentially anti-parallel bundles that associate into meshworks. Plays a major role in cytokinesis. Negatively regulates cortical localization of rapgap1. The chain is Cortexillin-2 (ctxB) from Dictyostelium discoideum (Social amoeba).